Here is a 248-residue protein sequence, read N- to C-terminus: Allergin-1 (248 aa).

A signal peptide spans 1 to 33 (MGDDDTPVCLSVASCKGVSCWLDKLLLWALTLS). Residues 34 to 150 (ITLRNTAVDC…DESCSSCLLS (117 aa)) lie on the Extracellular side of the membrane. Residues 54–137 (PNLNSSMSVV…SKYSQNFNFT (84 aa)) form the Ig-like C2-type domain. Residue Asn68 is glycosylated (N-linked (GlcNAc...) asparagine). Cys73 and Cys120 are oxidised to a cystine. Asn135 carries N-linked (GlcNAc...) asparagine glycosylation. Residues 151 to 171 (LLLPGVLLGLILPGLAFLIYL) form a helical membrane-spanning segment. Residues 172–248 (KYKKGCTGKT…DDYIYSELTY (77 aa)) lie on the Cytoplasmic side of the membrane. Short sequence motifs (ITIM motif) lie at residues 216–221 (IHYTTP) and 241–246 (YIYSEL). Phosphotyrosine occurs at positions 218 and 243.

As to quaternary structure, monomer. Interacts (tyrosine-phosphorylated) with PTPN6, PTPN11 and INPP5D. Post-translationally, N-glycosylated. In terms of tissue distribution, mast cell-specific. Expressed in primary and transformed mast cells.

The protein localises to the cell membrane. Functionally, immunoglobulin-like receptor which plays an inhibitory role in degranulation of mast cells. Negatively regulates IgE-mediated mast cell activation and suppresses the type I immediate hypersensitivity reaction. The sequence is that of Allergin-1 (Milr1) from Rattus norvegicus (Rat).